Here is a 285-residue protein sequence, read N- to C-terminus: 3-methyl-2-oxobutanoate hydroxymethyltransferase (285 aa).

Residues 1 to 22 (MSEHNVYGAAQPAQPGQPAQPR) are disordered. The segment covering 8 to 21 (GAAQPAQPGQPAQP) has biased composition (low complexity). The Mg(2+) site is built by Asp66 and Asp105. Residues 66 to 67 (DS), Asp105, and Lys135 contribute to the 3-methyl-2-oxobutanoate site. Glu137 provides a ligand contact to Mg(2+). Catalysis depends on Glu203, which acts as the Proton acceptor.

It belongs to the PanB family. As to quaternary structure, homodecamer; pentamer of dimers. Mg(2+) serves as cofactor.

It is found in the cytoplasm. The catalysed reaction is 3-methyl-2-oxobutanoate + (6R)-5,10-methylene-5,6,7,8-tetrahydrofolate + H2O = 2-dehydropantoate + (6S)-5,6,7,8-tetrahydrofolate. It functions in the pathway cofactor biosynthesis; (R)-pantothenate biosynthesis; (R)-pantoate from 3-methyl-2-oxobutanoate: step 1/2. Functionally, catalyzes the reversible reaction in which hydroxymethyl group from 5,10-methylenetetrahydrofolate is transferred onto alpha-ketoisovalerate to form ketopantoate. The polypeptide is 3-methyl-2-oxobutanoate hydroxymethyltransferase (Mycolicibacterium paratuberculosis (strain ATCC BAA-968 / K-10) (Mycobacterium paratuberculosis)).